Here is a 1024-residue protein sequence, read N- to C-terminus: MTMITDSLAVVLQRRDWENPGVTQLNRLAAHPPFASWRNSEEARTDRPSQESRSLNGEWRFAWFPAPEAVPESWLERDLPDADTVIVPSNWQMHGYDAPIYTNVTYPIAVNPPYVPTENPTGCYSLTFNVDESWLQEGQTRIIFDGVNSAFHLWCNGRWVGYGQDSRLPSEFDLSAFLHAGENRLAVMVLRWSDGSYLEDQDMWRMSGIFRDVSLLHKPSTQISDFHVATHFNDDFSRAVLEADVQMYGELRDELRVTVSLWQGETQVASGTAPFGGEIIDERGGYADHVTLRLNVENPKLWSAEIPNLYRAVVELHTADGTLIEAEACDVGFREVRIENGLLLLNGKPLLIRGVNRHEHHPLHGQVMDEQTMVQDILLMKQNNFNAVRCSHYPNHPLWYTLCDHYGLYVVDEANIETHGMVPMNRLTDDPRWLPAMSERVTRMVQRDRNHPSVIIWSLGNESGHGANHDALYRWIKSVDPSRPVQYEGGGADTFATDIICPMYARVDEDQPFPAVPKWSIKKWLSLPGETRPLILCEYAHAMGNSLGGFAKYWQAFRQYPRLQGGFVWDWVDQSLIKYDENGNPWSAYGGDFGDTPNDRQFCMNGLVFADRTPHPALTEAKHQQQFFQFSLSGRTIEVTSEDLFRHSDNELLHWMVALDGKPLASGEVPLDVAPQGKQLIELPELPQPESAGQLWLTVHVVQPNATTWSAAGHISAWQQWRLAENLSVTLPSAPHAIPQLTTSETDFCIELDNKRWQFNRQSGFLSQMWIGDKKQLLTPLRDQFTRAPLDNDIGVSEATRIDPNAWVERWKAAGHYQAEAALLQCTADTLADAVLITTVHAWQHQGKTLFISRKTYRIDGSGQMAITVDVEVASNTPHPARIGLTCQLAQVAERVNWLGLGPQENYPDRLTAACFDRWDLPLSDMYTPYVFPSENGLRCGTRELNYGPHQWRGDFQFNISRYSQQQLMETSHRHLLHAEEGTWLNIDGFHMGIGGDDSWSPSVSAEFHLSAGSYHYQLLWCQK.

Residues Asn-103 and Asp-202 each contribute to the substrate site. Na(+) is bound at residue Asp-202. 3 residues coordinate Mg(2+): Glu-417, His-419, and Glu-462. Substrate contacts are provided by residues Glu-462 and 538–541; that span reads EYAH. Glu-462 serves as the catalytic Proton donor. The active-site Nucleophile is Glu-538. Asn-598 provides a ligand contact to Mg(2+). Positions 602 and 605 each coordinate Na(+). Residues Asn-605 and Trp-1000 each coordinate substrate.

This sequence belongs to the glycosyl hydrolase 2 family. As to quaternary structure, homotetramer. Requires Mg(2+) as cofactor. Na(+) serves as cofactor.

It catalyses the reaction Hydrolysis of terminal non-reducing beta-D-galactose residues in beta-D-galactosides.. This Klebsiella pneumoniae protein is Beta-galactosidase.